Reading from the N-terminus, the 371-residue chain is MGVHKKGYLVLEDGSVIEGKAFGAETIRYGEVVFTTAMVGYPESLTDPSYKGQILIATNPLMGTYGVSSKSLKEHGLPLHYESDSIKVEGFVISFLMRPNHWSSEMTLDEWLRREGVPGLYGVDTRALVKKIREEGVMRGAIVTTETDLEEILENIRKISYESTNFVELVSPKNPIVHTPKNVKFRVVVLDLGVKFGILRELLKRGIEVVRIPWNWDILEAYYSYNADGIFISNGPGNPTLLKEVAKRIRKAFNEEIPMMGICLGQQLLALADGAEIYKLKYGHRGINKPVKDLESGKAFVTTQNHGYAIVPESLNEFKVWMVNLDDNSVEGIKHESLPIIATQYHPEASPGPWDSLWVFDEFVKILEGRK.

The tract at residues 1–182 is CPSase; that stretch reads MGVHKKGYLV…KNPIVHTPKN (182 aa). L-glutamine is bound by residues serine 49, glycine 235, and glycine 237. One can recognise a Glutamine amidotransferase type-1 domain in the interval 186-371; that stretch reads RVVVLDLGVK…EFVKILEGRK (186 aa). Residue cysteine 263 is the Nucleophile of the active site. L-glutamine is bound by residues leucine 264, glutamine 267, asparagine 305, glycine 307, and tyrosine 308. Active-site residues include histidine 346 and glutamate 348.

This sequence belongs to the CarA family. In terms of assembly, composed of two chains; the small (or glutamine) chain promotes the hydrolysis of glutamine to ammonia, which is used by the large (or ammonia) chain to synthesize carbamoyl phosphate. Tetramer of heterodimers (alpha,beta)4.

It catalyses the reaction hydrogencarbonate + L-glutamine + 2 ATP + H2O = carbamoyl phosphate + L-glutamate + 2 ADP + phosphate + 2 H(+). The catalysed reaction is L-glutamine + H2O = L-glutamate + NH4(+). The protein operates within amino-acid biosynthesis; L-arginine biosynthesis; carbamoyl phosphate from bicarbonate: step 1/1. Its pathway is pyrimidine metabolism; UMP biosynthesis via de novo pathway; (S)-dihydroorotate from bicarbonate: step 1/3. Its function is as follows. Small subunit of the glutamine-dependent carbamoyl phosphate synthetase (CPSase). CPSase catalyzes the formation of carbamoyl phosphate from the ammonia moiety of glutamine, carbonate, and phosphate donated by ATP, constituting the first step of 2 biosynthetic pathways, one leading to arginine and/or urea and the other to pyrimidine nucleotides. The small subunit (glutamine amidotransferase) binds and cleaves glutamine to supply the large subunit with the substrate ammonia. This chain is Carbamoyl phosphate synthase small chain, found in Pyrococcus furiosus (strain ATCC 43587 / DSM 3638 / JCM 8422 / Vc1).